We begin with the raw amino-acid sequence, 222 residues long: Chromatin-associated protein SWI6 (222 aa).

Basic and acidic residues predominate over residues 1–15 (MPVIKKEELSQKKDL). Disordered regions lie at residues 1–26 (MPVI…GLED) and 77–147 (ETQD…DRQY). The span at 16–26 (ESEEEDSGLED) shows a compositional bias: acidic residues. The 60-residue stretch at 28 to 87 (YEVEKVIKHRGKGKNIEFLVRWKGYGPEYDTWEPTENVASAEEAVAAYWETQDKTATAPR) folds into the Chromo domain.

In terms of assembly, interacts with DMT5.

The protein localises to the nucleus. Functionally, recognizes and binds histone H3 tails methylated at 'Lys-9', leading to epigenetic repression. Localizes DMT5 to heterochromatin characterized by trimethylation of histone H3 tails at 'Lys-9'. This Cryptococcus neoformans var. grubii serotype A (strain H99 / ATCC 208821 / CBS 10515 / FGSC 9487) (Filobasidiella neoformans var. grubii) protein is Chromatin-associated protein SWI6.